Reading from the N-terminus, the 159-residue chain is MSRISQIELDDRNLPPPTPEIEQERKVAIFDLIEENSFVLPKRDERDVPEGPYHLSLSIREKRLVFDVQTEGGDKAAEFHLSLSPFRQVVKDYYQICESYFTAVKTLPPSQIETIDMARRGIHNEGSRVLQERLEGKAEVDTDTARRLFTLICVLHFGG.

Positions 1–21 (MSRISQIELDDRNLPPPTPEI) are disordered.

It belongs to the UPF0262 family.

This Ruegeria sp. (strain TM1040) (Silicibacter sp.) protein is UPF0262 protein TM1040_3562.